A 349-amino-acid polypeptide reads, in one-letter code: Probable ethanolamine kinase (349 aa).

This sequence belongs to the choline/ethanolamine kinase family.

It is found in the cytoplasm. The catalysed reaction is ethanolamine + ATP = phosphoethanolamine + ADP + H(+). It participates in phospholipid metabolism; phosphatidylethanolamine biosynthesis; phosphatidylethanolamine from ethanolamine: step 1/3. Functionally, highly specific for ethanolamine phosphorylation. May be a rate-controlling step in phosphatidylethanolamine biosynthesis. The protein is Probable ethanolamine kinase (etnk) of Nematostella vectensis (Starlet sea anemone).